The following is a 198-amino-acid chain: Guanylate kinase (198 aa).

Residues 8–188 form the Guanylate kinase-like domain; that stretch reads GRVVVLSGPS…ACSELVSLLV (181 aa). 15 to 22 is an ATP binding site; the sequence is GPSAVGKS.

The protein belongs to the guanylate kinase family.

The protein resides in the cytoplasm. The catalysed reaction is GMP + ATP = GDP + ADP. Essential for recycling GMP and indirectly, cGMP. The protein is Guanylate kinase of Mycobacterium sp. (strain MCS).